A 34-amino-acid polypeptide reads, in one-letter code: Brevinin-2Ec (34 aa).

An intrachain disulfide couples Cys-28 to Cys-34.

Belongs to the frog skin active peptide (FSAP) family. Brevinin subfamily. Expressed by the skin glands.

It localises to the secreted. Its function is as follows. Shows antibacterial activity against representative Gram-negative and Gram-positive bacterial species, and hemolytic activity. The chain is Brevinin-2Ec from Pelophylax lessonae (Pool frog).